A 303-amino-acid chain; its full sequence is L(+)-tartrate dehydratase subunit alpha (303 aa).

The iron-sulfur cluster site is built by Cys71, Cys190, and Cys277.

It belongs to the class-I fumarase family. As to quaternary structure, tetramer of two alpha and two beta subunits. Iron-sulfur cluster is required as a cofactor.

The catalysed reaction is (2R,3R)-tartrate = oxaloacetate + H2O. The chain is L(+)-tartrate dehydratase subunit alpha (ttdA) from Escherichia coli O6:K15:H31 (strain 536 / UPEC).